Consider the following 386-residue polypeptide: Homoserine O-succinyltransferase (386 aa).

Positions 49 to 358 constitute an AB hydrolase-1 domain; it reads NAILICHALS…DAEQGHDSFL (310 aa). The active-site Nucleophile is the S156. R226 contributes to the substrate binding site. Catalysis depends on residues D321 and H354. D355 lines the substrate pocket.

Belongs to the AB hydrolase superfamily. MetX family. As to quaternary structure, homodimer.

It localises to the cytoplasm. The enzyme catalyses L-homoserine + succinyl-CoA = O-succinyl-L-homoserine + CoA. It participates in amino-acid biosynthesis; L-methionine biosynthesis via de novo pathway; O-succinyl-L-homoserine from L-homoserine: step 1/1. Its function is as follows. Transfers a succinyl group from succinyl-CoA to L-homoserine, forming succinyl-L-homoserine. In Acinetobacter baumannii (strain AB307-0294), this protein is Homoserine O-succinyltransferase.